Reading from the N-terminus, the 331-residue chain is Glyceraldehyde-3-phosphate dehydrogenase, cytosolic (331 aa).

Residues 11 to 12 (RI), aspartate 33, and arginine 77 each bind NAD(+). D-glyceraldehyde 3-phosphate contacts are provided by residues 148-150 (SCT), threonine 179, 208-209 (TG), and arginine 231. Catalysis depends on cysteine 149, which acts as the Nucleophile. Asparagine 313 is a binding site for NAD(+).

This sequence belongs to the glyceraldehyde-3-phosphate dehydrogenase family. In terms of assembly, homotetramer.

It is found in the cytoplasm. It carries out the reaction D-glyceraldehyde 3-phosphate + phosphate + NAD(+) = (2R)-3-phospho-glyceroyl phosphate + NADH + H(+). The protein operates within carbohydrate degradation; glycolysis; pyruvate from D-glyceraldehyde 3-phosphate: step 1/5. This chain is Glyceraldehyde-3-phosphate dehydrogenase, cytosolic (GAPC), found in Leishmania mexicana.